A 449-amino-acid chain; its full sequence is Exodeoxyribonuclease 7 large subunit (449 aa).

The protein belongs to the XseA family. In terms of assembly, heterooligomer composed of large and small subunits.

The protein localises to the cytoplasm. It carries out the reaction Exonucleolytic cleavage in either 5'- to 3'- or 3'- to 5'-direction to yield nucleoside 5'-phosphates.. Bidirectionally degrades single-stranded DNA into large acid-insoluble oligonucleotides, which are then degraded further into small acid-soluble oligonucleotides. The chain is Exodeoxyribonuclease 7 large subunit from Salmonella schwarzengrund (strain CVM19633).